The primary structure comprises 215 residues: Large ribosomal subunit protein uL16 (215 aa).

This sequence belongs to the universal ribosomal protein uL16 family. As to quaternary structure, component of the large ribosomal subunit.

The protein localises to the cytoplasm. Component of the large ribosomal subunit. Plays a role in the formation of actively translating ribosomes. Plays a role in the embryonic brain development. This Danio rerio (Zebrafish) protein is Large ribosomal subunit protein uL16.